The primary structure comprises 643 residues: Threonine--tRNA ligase (643 aa).

Residues 1–61 (MIKVSLKDGS…NEDVSLSICT (61 aa)) form the TGS domain. Positions 240 to 540 (DHNKLGRELK…LIEKYAGAFP (301 aa)) are catalytic. Zn(2+) contacts are provided by C335, H386, and H517.

Belongs to the class-II aminoacyl-tRNA synthetase family. In terms of assembly, homodimer. Requires Zn(2+) as cofactor.

The protein resides in the cytoplasm. The catalysed reaction is tRNA(Thr) + L-threonine + ATP = L-threonyl-tRNA(Thr) + AMP + diphosphate + H(+). In terms of biological role, catalyzes the attachment of threonine to tRNA(Thr) in a two-step reaction: L-threonine is first activated by ATP to form Thr-AMP and then transferred to the acceptor end of tRNA(Thr). Also edits incorrectly charged L-seryl-tRNA(Thr). This Clostridium botulinum (strain Alaska E43 / Type E3) protein is Threonine--tRNA ligase.